Reading from the N-terminus, the 244-residue chain is tRNA (guanine-N(1)-)-methyltransferase (244 aa).

S-adenosyl-L-methionine contacts are provided by residues G113 and 132 to 137; that span reads IGDYVL.

This sequence belongs to the RNA methyltransferase TrmD family. Homodimer.

It is found in the cytoplasm. The catalysed reaction is guanosine(37) in tRNA + S-adenosyl-L-methionine = N(1)-methylguanosine(37) in tRNA + S-adenosyl-L-homocysteine + H(+). Specifically methylates guanosine-37 in various tRNAs. This is tRNA (guanine-N(1)-)-methyltransferase from Shouchella clausii (strain KSM-K16) (Alkalihalobacillus clausii).